The chain runs to 312 residues: Ribose-phosphate pyrophosphokinase (312 aa).

Residues 34-36 and 93-94 each bind ATP; these read DLE and RQ. 2 residues coordinate Mg(2+): H127 and D168. K192 is an active-site residue. D-ribose 5-phosphate is bound by residues R194, D218, and 222–226; that span reads DSAGT.

The protein belongs to the ribose-phosphate pyrophosphokinase family. Class I subfamily. As to quaternary structure, homohexamer. Mg(2+) is required as a cofactor.

Its subcellular location is the cytoplasm. The catalysed reaction is D-ribose 5-phosphate + ATP = 5-phospho-alpha-D-ribose 1-diphosphate + AMP + H(+). It participates in metabolic intermediate biosynthesis; 5-phospho-alpha-D-ribose 1-diphosphate biosynthesis; 5-phospho-alpha-D-ribose 1-diphosphate from D-ribose 5-phosphate (route I): step 1/1. In terms of biological role, involved in the biosynthesis of the central metabolite phospho-alpha-D-ribosyl-1-pyrophosphate (PRPP) via the transfer of pyrophosphoryl group from ATP to 1-hydroxyl of ribose-5-phosphate (Rib-5-P). The polypeptide is Ribose-phosphate pyrophosphokinase (Caulobacter vibrioides (strain ATCC 19089 / CIP 103742 / CB 15) (Caulobacter crescentus)).